Reading from the N-terminus, the 225-residue chain is Alpha-tubulin N-acetyltransferase 1 (225 aa).

Residues 1 to 190 (MEFPFDVDAL…NNFVIFEGFF (190 aa)) form the N-acetyltransferase domain. Lysine 56 carries the post-translational modification N6-acetyllysine; by autocatalysis. 124–137 (FYIHESLQRHGHGR) is a binding site for acetyl-CoA. Residue lysine 146 is modified to N6-acetyllysine; by autocatalysis. 160–169 (SQKLLKFLNK) contributes to the acetyl-CoA binding site. A disordered region spans residues 195–225 (PPARKLPPKRAEGDIKPYSSSDRESGLPQGW). The span at 203–219 (KRAEGDIKPYSSSDRES) shows a compositional bias: basic and acidic residues. Residue lysine 210 is modified to N6-acetyllysine; by autocatalysis.

The protein belongs to the acetyltransferase ATAT1 family. Component of the BBSome complex. Interacts with AP2 alpha-adaptins, including AP2A2, but not with AP1 gamma-adaptin (AP1G1/AP1G2); this interaction is required for efficient alpha-tubulin acetylation, hence clathrin-coated pits are sites of microtubule acetylation. In terms of processing, autoacetylation strongly increases tubulin acetylation.

It is found in the cytoplasm. Its subcellular location is the membrane. The protein resides in the clathrin-coated pit. The protein localises to the cell junction. It localises to the focal adhesion. It is found in the cell projection. Its subcellular location is the axon. The protein resides in the cytoskeleton. The protein localises to the spindle. It catalyses the reaction L-lysyl-[alpha-tubulin] + acetyl-CoA = N(6)-acetyl-L-lysyl-[alpha-tubulin] + CoA + H(+). In terms of biological role, specifically acetylates 'Lys-40' in alpha-tubulin on the lumenal side of microtubules. Promotes microtubule destabilization and accelerates microtubule dynamics; this activity may be independent of acetylation activity. Acetylates alpha-tubulin with a slow enzymatic rate, due to a catalytic site that is not optimized for acetyl transfer. Enters the microtubule through each end and diffuses quickly throughout the lumen of microtubules. Acetylates only long/old microtubules because of its slow acetylation rate since it does not have time to act on dynamically unstable microtubules before the enzyme is released. Required for normal sperm flagellar function. Promotes directional cell locomotion and chemotaxis, through AP2A2-dependent acetylation of alpha-tubulin at clathrin-coated pits that are concentrated at the leading edge of migrating cells. May facilitate primary cilium assembly. This Bos taurus (Bovine) protein is Alpha-tubulin N-acetyltransferase 1.